The following is a 184-amino-acid chain: Protein GrpE (184 aa).

The segment covering 1 to 14 has biased composition (polar residues); sequence MANEQNEQSQDLSS. A disordered region spans residues 1–35; it reads MANEQNEQSQDLSSEQTTQDHEQTQTEGVEQGAEI.

Belongs to the GrpE family. As to quaternary structure, homodimer.

The protein resides in the cytoplasm. In terms of biological role, participates actively in the response to hyperosmotic and heat shock by preventing the aggregation of stress-denatured proteins, in association with DnaK and GrpE. It is the nucleotide exchange factor for DnaK and may function as a thermosensor. Unfolded proteins bind initially to DnaJ; upon interaction with the DnaJ-bound protein, DnaK hydrolyzes its bound ATP, resulting in the formation of a stable complex. GrpE releases ADP from DnaK; ATP binding to DnaK triggers the release of the substrate protein, thus completing the reaction cycle. Several rounds of ATP-dependent interactions between DnaJ, DnaK and GrpE are required for fully efficient folding. The chain is Protein GrpE from Acinetobacter baylyi (strain ATCC 33305 / BD413 / ADP1).